Consider the following 198-residue polypeptide: Ribonuclease HII (198 aa).

One can recognise an RNase H type-2 domain in the interval 10–198 (HLVAGVDEVG…PVRRALGIAS (189 aa)). 3 residues coordinate a divalent metal cation: aspartate 16, glutamate 17, and aspartate 108.

This sequence belongs to the RNase HII family. Mn(2+) is required as a cofactor. Requires Mg(2+) as cofactor.

The protein resides in the cytoplasm. It catalyses the reaction Endonucleolytic cleavage to 5'-phosphomonoester.. In terms of biological role, endonuclease that specifically degrades the RNA of RNA-DNA hybrids. The protein is Ribonuclease HII of Cronobacter sakazakii (strain ATCC BAA-894) (Enterobacter sakazakii).